We begin with the raw amino-acid sequence, 530 residues long: Chaperone Ric-8A (530 aa).

At S435 the chain carries Phosphoserine. A phosphothreonine mark is found at T440 and T442. Residues S501, S522, S523, and S527 each carry the phosphoserine modification.

This sequence belongs to the synembryn family. As to quaternary structure, interacts with GDP-bound G alpha proteins GNAI1, GNAO1 and GNAQ, and with GNA13 with lower affinity. Does not interact with G-alpha proteins when they are in complex with subunits beta and gamma. Interacts (via C-terminus) with RGS14; the interaction stimulates the dissociation of the complex between RGS14 and the active GTP-bound form of GNAI1. Interacts with NCS1; interaction is favored in the absence of Ca(2+) and myristoylation of NCS1 is not required. In terms of processing, phosphorylated at Ser-435 and Thr-440 by CK2, stabilizing its interface with G alpha proteins.

It is found in the cytoplasm. It localises to the cell cortex. In terms of biological role, chaperone that specifically binds and folds nascent G alpha proteins prior to G protein heterotrimer formation, promoting their stability and activity: folds GNAI1, GNAO1, GNA13 and GNAQ. Does not fold G(s) G-alpha proteins GNAS nor GNAL. Also acts as a guanine nucleotide exchange factor (GEF) for G alpha proteins by stimulating exchange of bound GDP for free GTP. Involved in regulation of microtubule pulling forces during mitotic movement of chromosomes by stimulating G(i)-alpha protein (GNAI1), possibly leading to release G(i)-alpha-GTP and NuMA proteins from the NuMA-GPSM2-G(i)-alpha-GDP complex. Also acts as an activator for G(q)-alpha (GNAQ) protein by enhancing the G(q)-coupled receptor-mediated ERK activation. The protein is Chaperone Ric-8A (RIC8A) of Macaca fascicularis (Crab-eating macaque).